The chain runs to 347 residues: Transcription factor JunB (347 aa).

Residues Lys4, Lys33, and Lys36 each participate in a glycyl lysine isopeptide (Lys-Gly) (interchain with G-Cter in SUMO2) cross-link. The interval 50–77 is disordered; the sequence is LKAPGARGPGPEGNGGGSYFSSQGSDTG. Positions 56-67 are enriched in gly residues; the sequence is RGPGPEGNGGGS. The span at 68-77 shows a compositional bias: polar residues; the sequence is YFSSQGSDTG. Residue Lys81 forms a Glycyl lysine isopeptide (Lys-Gly) (interchain with G-Cter in SUMO2) linkage. Thr102 and Thr104 each carry phosphothreonine. Ser117 bears the Phosphoserine mark. A Glycyl lysine isopeptide (Lys-Gly) (interchain with G-Cter in SUMO2) cross-link involves residue Lys141. N6-acetyllysine; alternate is present on Lys240. Lys240 is covalently cross-linked (Glycyl lysine isopeptide (Lys-Gly) (interchain with G-Cter in SUMO1); alternate). Lys240 participates in a covalent cross-link: Glycyl lysine isopeptide (Lys-Gly) (interchain with G-Cter in SUMO2); alternate. Residues 241-253 show a composition bias toward basic and acidic residues; the sequence is EEPQTVPEARSRD. The disordered stretch occupies residues 241-260; it reads EEPQTVPEARSRDATPPVSP. A Phosphoserine modification is found at Ser251. At Thr255 the chain carries Phosphothreonine. A Phosphoserine modification is found at Ser259. Residues 268–295 form a basic motif region; the sequence is RIKVERKRLRNRLAATKCRKRKLERIAR. A bZIP domain is found at 268 to 331; it reads RIKVERKRLR…AQLKQKVMTH (64 aa). The interval 296 to 324 is leucine-zipper; it reads LEDKVKTLKAENAGLSSTAGLLREQVAQL. Residue Lys343 forms a Glycyl lysine isopeptide (Lys-Gly) (interchain with G-Cter in SUMO2) linkage.

Belongs to the bZIP family. Jun subfamily. Binds DNA as a homodimer or as a heterodimer with another member of the Jun/Fos family. Component of an AP-1 transcription factor complex composed of JUN-FOS heterodimers. As part of the AP-1 transcription factor complex, forms heterodimers with FOSB, thereby binding to the AP-1 consensus sequence and stimulating transcription. Interacts with ITCH (via its WW domains). Post-translationally, ubiquitinated by ITCH, leading to its degradation.

The protein resides in the nucleus. Its function is as follows. Transcription factor involved in regulating gene activity following the primary growth factor response. Binds to the DNA sequence 5'-TGA[GC]TCA-3'. Heterodimerizes with proteins of the FOS family to form an AP-1 transcription complex, thereby enhancing its DNA binding activity to an AP-1 consensus sequence and its transcriptional activity. The chain is Transcription factor JunB (JUNB) from Bos taurus (Bovine).